Reading from the N-terminus, the 591-residue chain is Formate--tetrahydrofolate ligase (591 aa).

74-81 (TPLGEGKS) lines the ATP pocket.

The protein belongs to the formate--tetrahydrofolate ligase family.

It carries out the reaction (6S)-5,6,7,8-tetrahydrofolate + formate + ATP = (6R)-10-formyltetrahydrofolate + ADP + phosphate. The protein operates within one-carbon metabolism; tetrahydrofolate interconversion. This is Formate--tetrahydrofolate ligase from Lawsonia intracellularis (strain PHE/MN1-00).